Consider the following 478-residue polypeptide: Allene oxide synthase 2 (478 aa).

The heme b site is built by Lys-88, His-119, and Lys-123. Asn-278 provides a ligand contact to (13S)-hydroperoxy-(9Z,11E,15Z)-octadecatrienoate. 2 residues coordinate heme b: Lys-427 and Cys-429.

It belongs to the cytochrome P450 family. Requires heme b as cofactor. In terms of tissue distribution, weakly expressed in roots, shoots, leaves and flowers.

It carries out the reaction (13S)-hydroperoxy-(9Z,11E,15Z)-octadecatrienoate = (9Z,13S,15Z)-12,13-epoxyoctadeca-9,11,15-trienoate + H2O. Its pathway is lipid metabolism; oxylipin biosynthesis. Functionally, involved in the biosynthesis of jasmonic acid, a growth regulator that is implicated also as a signaling molecule in plant defense. Converts 13-hydroperoxylinolenic acid to 12,13-epoxylinolenic acid. This Oryza sativa subsp. japonica (Rice) protein is Allene oxide synthase 2 (CYP74A2).